A 468-amino-acid polypeptide reads, in one-letter code: Cytochrome bd ubiquinol oxidase subunit 1 (468 aa).

The next 9 helical transmembrane spans lie at 15–35 (TLFHFLFVPMSIGLVFMVALM), 51–71 (AKFWGHLFLINFAVGVVTGIL), 95–115 (LAIEALLAFFMESIFIGLWIF), 124–144 (IHALCIWLVSFGTIMSSFWIL), 177–197 (LWVEFPHVIFGALATGAFFIA), 219–239 (LAMIVGLCAGLGVGLSGHMQA), 331–351 (FRIMVGAGVVMILAALGGLWL), 366–386 (IMIALISFPFLANSAGWIMTE), and 416–436 (SIIAFGVMYMILGALLVFLFI). H18 is a heme b binding site. H183 lines the heme b pocket. Residue M334 participates in heme b binding. The segment at 448 to 468 (HHDVPVSTDPFSQEVYHGISS) is disordered.

The protein belongs to the cytochrome ubiquinol oxidase subunit 1 family. In terms of assembly, heterodimer of subunits I and II. It depends on heme b as a cofactor. Requires heme d cis-diol as cofactor.

It localises to the cell membrane. The enzyme catalyses 2 a ubiquinol + O2(in) + 4 H(+)(in) = 2 a ubiquinone + 2 H2O(in) + 4 H(+)(out). The polypeptide is Cytochrome bd ubiquinol oxidase subunit 1 (cydA) (Bacillus subtilis (strain 168)).